The chain runs to 438 residues: Ornithine aminotransferase car2 (438 aa).

At K275 the chain carries N6-(pyridoxal phosphate)lysine.

The protein belongs to the class-III pyridoxal-phosphate-dependent aminotransferase family. The cofactor is pyridoxal 5'-phosphate.

Its subcellular location is the cytoplasm. It localises to the nucleus. The enzyme catalyses a 2-oxocarboxylate + L-ornithine = L-glutamate 5-semialdehyde + an L-alpha-amino acid. It participates in amino-acid biosynthesis; L-proline biosynthesis; L-glutamate 5-semialdehyde from L-ornithine: step 1/1. The protein is Ornithine aminotransferase car2 (car2) of Schizosaccharomyces pombe (strain 972 / ATCC 24843) (Fission yeast).